A 158-amino-acid chain; its full sequence is 2-C-methyl-D-erythritol 2,4-cyclodiphosphate synthase (158 aa).

Asp-8 and His-10 together coordinate a divalent metal cation. 4-CDP-2-C-methyl-D-erythritol 2-phosphate-binding positions include 8–10 (DVH) and 34–35 (HS). His-42 lines the a divalent metal cation pocket. Residues 56–58 (DIG), 61–65 (FPDTD), 100–106 (AQAPKMA), 132–135 (TTSE), Phe-139, and Arg-142 each bind 4-CDP-2-C-methyl-D-erythritol 2-phosphate.

The protein belongs to the IspF family. In terms of assembly, homotrimer. The cofactor is a divalent metal cation.

The catalysed reaction is 4-CDP-2-C-methyl-D-erythritol 2-phosphate = 2-C-methyl-D-erythritol 2,4-cyclic diphosphate + CMP. The protein operates within isoprenoid biosynthesis; isopentenyl diphosphate biosynthesis via DXP pathway; isopentenyl diphosphate from 1-deoxy-D-xylulose 5-phosphate: step 4/6. Functionally, involved in the biosynthesis of isopentenyl diphosphate (IPP) and dimethylallyl diphosphate (DMAPP), two major building blocks of isoprenoid compounds. Catalyzes the conversion of 4-diphosphocytidyl-2-C-methyl-D-erythritol 2-phosphate (CDP-ME2P) to 2-C-methyl-D-erythritol 2,4-cyclodiphosphate (ME-CPP) with a corresponding release of cytidine 5-monophosphate (CMP). This Aliivibrio fischeri (strain ATCC 700601 / ES114) (Vibrio fischeri) protein is 2-C-methyl-D-erythritol 2,4-cyclodiphosphate synthase.